We begin with the raw amino-acid sequence, 146 residues long: Anti-sigma F factor (146 aa).

It belongs to the anti-sigma-factor family.

It carries out the reaction L-seryl-[protein] + ATP = O-phospho-L-seryl-[protein] + ADP + H(+). The catalysed reaction is L-threonyl-[protein] + ATP = O-phospho-L-threonyl-[protein] + ADP + H(+). Its function is as follows. Binds to sigma F and blocks its ability to form an RNA polymerase holoenzyme (E-sigma F). Phosphorylates SpoIIAA on a serine residue. This phosphorylation may enable SpoIIAA to act as an anti-anti-sigma factor that counteracts SpoIIAB and thus releases sigma F from inhibition. This chain is Anti-sigma F factor, found in Halalkalibacterium halodurans (strain ATCC BAA-125 / DSM 18197 / FERM 7344 / JCM 9153 / C-125) (Bacillus halodurans).